Here is a 150-residue protein sequence, read N- to C-terminus: MAEILDKVDRRLLEELKINARENIATLSKKLGIPRTTVHYRIKRLVEEGIIERFTIKPNYKKLNLGTTAFILIRYDPDSGLTQRQVAEQIAKIPGVYEVHIIAGEWDLLLKVRASNAEEVGRIVIDKLREIRGVGQTVTMVSFDTVKEEI.

Residues 5–66 form the HTH asnC-type domain; the sequence is LDKVDRRLLE…KPNYKKLNLG (62 aa). Positions 24–43 form a DNA-binding region, H-T-H motif; sequence IATLSKKLGIPRTTVHYRIK.

This is an uncharacterized protein from Pyrococcus abyssi (strain GE5 / Orsay).